The chain runs to 429 residues: Glutamate-1-semialdehyde 2,1-aminomutase (429 aa).

At lysine 266 the chain carries N6-(pyridoxal phosphate)lysine.

This sequence belongs to the class-III pyridoxal-phosphate-dependent aminotransferase family. HemL subfamily. The cofactor is pyridoxal 5'-phosphate.

Its subcellular location is the cytoplasm. It catalyses the reaction (S)-4-amino-5-oxopentanoate = 5-aminolevulinate. Its pathway is porphyrin-containing compound metabolism; protoporphyrin-IX biosynthesis; 5-aminolevulinate from L-glutamyl-tRNA(Glu): step 2/2. The sequence is that of Glutamate-1-semialdehyde 2,1-aminomutase (hemL) from Aeropyrum pernix (strain ATCC 700893 / DSM 11879 / JCM 9820 / NBRC 100138 / K1).